Here is a 309-residue protein sequence, read N- to C-terminus: tRNA uridine(34) hydroxylase (309 aa).

The region spanning 130-224 is the Rhodanese domain; the sequence is SDPDTIVIDT…YLEEVPQEES (95 aa). Residue C184 is the Cysteine persulfide intermediate of the active site.

Belongs to the TrhO family.

The catalysed reaction is uridine(34) in tRNA + AH2 + O2 = 5-hydroxyuridine(34) in tRNA + A + H2O. Catalyzes oxygen-dependent 5-hydroxyuridine (ho5U) modification at position 34 in tRNAs. The polypeptide is tRNA uridine(34) hydroxylase (Rhizobium etli (strain ATCC 51251 / DSM 11541 / JCM 21823 / NBRC 15573 / CFN 42)).